Reading from the N-terminus, the 480-residue chain is Cobyric acid synthase (480 aa).

Positions 246 to 434 constitute a GATase cobBQ-type domain; sequence KILIAVPILP…VHGLFSELAQ (189 aa). Cysteine 328 serves as the catalytic Nucleophile. Histidine 426 is an active-site residue.

Belongs to the CobB/CobQ family. CobQ subfamily.

It functions in the pathway cofactor biosynthesis; adenosylcobalamin biosynthesis. Its function is as follows. Catalyzes amidations at positions B, D, E, and G on adenosylcobyrinic A,C-diamide. NH(2) groups are provided by glutamine, and one molecule of ATP is hydrogenolyzed for each amidation. The polypeptide is Cobyric acid synthase (Methylocella silvestris (strain DSM 15510 / CIP 108128 / LMG 27833 / NCIMB 13906 / BL2)).